The following is a 145-amino-acid chain: Putative pre-16S rRNA nuclease (145 aa).

The protein belongs to the YqgF nuclease family.

The protein localises to the cytoplasm. Its function is as follows. Could be a nuclease involved in processing of the 5'-end of pre-16S rRNA. The polypeptide is Putative pre-16S rRNA nuclease (Limosilactobacillus fermentum (strain NBRC 3956 / LMG 18251) (Lactobacillus fermentum)).